The chain runs to 662 residues: Hypoxia-inducible factor 3-alpha (662 aa).

The tract at residues 1–25 (MDWDQDRSSTELRKEKSRDAARSRR) is disordered. The 54-residue stretch at 12-65 (LRKEKSRDAARSRRSQETEVLYQLAHTLPFARGVSAHLDKASIMRLTISYLRMH) folds into the bHLH domain. The nuclear localization signal stretch occupies residues 75–98 (QVRKEGEPLDACYLKALEGFVMVL). 2 consecutive PAS domains span residues 80–150 (GEPL…PSLS) and 225–295 (PHPA…LSKG). The segment at 228-272 (ASLEPPLGRGAFLSRHSLDMKFTYCDERIAEVAGYSPDDLIGCSA) is nuclear export signal. Residues 352-379 (EQTEQHTRRPPQLGTSSKKGIPGNSLDP) are disordered. The LRRLL signature appears at 410–413 (LRRL). 2 disordered regions span residues 417-445 (ILDG…ADLP) and 459-480 (STAR…PDTP). Residues 421–433 (PPTAATPSTPQAA) show a composition bias toward low complexity. Positions 448 to 581 (LAVGLENAHR…SEDKGLELLE (134 aa)) are ODD. Residues 450–501 (VGLENAHRLSTARKNKTMETDLDIAQDPDTPDLEMLAPYISMDDDFQLNSSE) form an NTAD region. Lys-463 is covalently cross-linked (Glycyl lysine isopeptide (Lys-Gly) (interchain with G-Cter in ubiquitin)). Positions 469-480 (TDLDIAQDPDTP) are enriched in acidic residues. Residues 485-492 (LAPYISMD) carry the LAPYISMD motif. 4-hydroxyproline is present on Pro-487. A disordered region spans residues 500–595 (SEQLPKVHRR…KRSPRLEPGS (96 aa)). Residues 505-521 (KVHRRPPRTARRPRARS) show a composition bias toward basic residues. Lys-565 participates in a covalent cross-link: Glycyl lysine isopeptide (Lys-Gly) (interchain with G-Cter in ubiquitin). The segment covering 572–584 (SEDKGLELLETKP) has biased composition (basic and acidic residues).

As to quaternary structure, interacts with ARNT, BAD, BCL2L2, EPAS1, HIF1A, MCL1 and VHL. Post-translationally, in normoxia, hydroxylated on Pro-487 in the oxygen-dependent degradation domain (ODD) by PHD. The hydroxylated proline promotes interaction with VHL, initiating rapid ubiquitination and subsequent proteasomal degradation. Ubiquitinated; ubiquitination occurs in a VHL- and oxygen-dependent pathway and subsequently targeted for proteasomal degradation. Expressed in the perivenous zone of the liver. Expressed in all tissues examined during normoxia. Expressed in brain and lung. Expressed in periportal and perivenous hepatocytes and in endothelial cells of the central vein (at protein level). Highest expression seen in the cerebral cortex, hippocampus, and lung. Low expression in myocardial tissue and liver.

It is found in the nucleus. The protein localises to the cytoplasm. Its subcellular location is the nucleus speckle. The protein resides in the mitochondrion. Functionally, acts as a transcriptional regulator in adaptive response to low oxygen tension. Attenuates the ability of transcription factor HIF1A, EPAS1 and the HIF1A-ARNT complex to bind to hypoxia-responsive elements (HRE) located within the enhancer/promoter of hypoxia-inducible target genes and hence inhibits HRE-driven transcriptional activation. Functions as an inhibitor of angiogenesis in hypoxic cells of the cornea. Plays a role in the development of the cardiorespiratory system. May also be involved in apoptosis. May act as a tumor suppressor. This chain is Hypoxia-inducible factor 3-alpha, found in Rattus norvegicus (Rat).